The chain runs to 446 residues: Nuclear envelope integral membrane protein 1 (446 aa).

An N-terminal signal peptide occupies residues 1–37 (MAGFMKYKSVSTTIETVRLKLILTAVLFLFPFSQTSG). N-linked (GlcNAc...) asparagine glycans are attached at residues Asn62, Asn118, and Asn129. Transmembrane regions (helical) follow at residues 154 to 174 (IYLF…DVLS), 181 to 201 (YSAG…FIVY), 209 to 229 (PFYM…QLVF), 239 to 259 (HWHL…AVCY), and 269 to 289 (SINI…YAGI). Positions 410 to 431 (LFSTDEEDKEEEEDGWETEDDI) are enriched in acidic residues. Residues 410–446 (LFSTDEEDKEEEEDGWETEDDIKPEVTSPRMNNTRGK) form a disordered region. Asn441 is a glycosylation site (N-linked (GlcNAc...) asparagine).

It belongs to the NEMP family.

The protein localises to the nucleus inner membrane. Its function is as follows. Contributes to nuclear envelope stiffness in germ cells. Involved in male and female fertility. Essential for normal erythropoiesis. Required for efficient nuclear envelope opening and enucleation during the late stages of erythroblast maturation. This is Nuclear envelope integral membrane protein 1 from Danio rerio (Zebrafish).